We begin with the raw amino-acid sequence, 175 residues long: Adenine phosphoribosyltransferase (175 aa).

The protein belongs to the purine/pyrimidine phosphoribosyltransferase family. Homodimer.

Its subcellular location is the cytoplasm. The catalysed reaction is AMP + diphosphate = 5-phospho-alpha-D-ribose 1-diphosphate + adenine. It functions in the pathway purine metabolism; AMP biosynthesis via salvage pathway; AMP from adenine: step 1/1. Functionally, catalyzes a salvage reaction resulting in the formation of AMP, that is energically less costly than de novo synthesis. The sequence is that of Adenine phosphoribosyltransferase from Lactobacillus acidophilus (strain ATCC 700396 / NCK56 / N2 / NCFM).